Consider the following 258-residue polypeptide: MTTSPLITAKNINHAYGNKTVLNDISLTLHSNEIVTLIGPNGAGKSTLLKILLNLIQPTSGEVTRKTGLRIGFMPQKIQVDASMPLSVQRFLELGLARQSQTLFNKKTNDTTELHEVINDLKLNDLLTHPIQQVSGGEMQRILLARALLRNPELLILDEPVQGVDLQGQTELYHYISEIRDKYGCGILMVSHDLHIVMRSTNKVLCLNQHLCCSGLPQTVSGSPAFQELFGQGFEEVAFYEHHHDDRVCTHTHGHTET.

One can recognise an ABC transporter domain in the interval 7 to 233 (ITAKNINHAY…PAFQELFGQG (227 aa)). 39 to 46 (GPNGAGKS) is an ATP binding site.

This sequence belongs to the ABC transporter superfamily. Zinc importer (TC 3.A.1.15.5) family. As to quaternary structure, the complex is composed of two ATP-binding proteins (ZnuC), two transmembrane proteins (ZnuB) and a solute-binding protein (ZnuA).

Its subcellular location is the cell inner membrane. The enzyme catalyses Zn(2+)(out) + ATP(in) + H2O(in) = Zn(2+)(in) + ADP(in) + phosphate(in) + H(+)(in). In terms of biological role, part of the ABC transporter complex ZnuABC involved in zinc import. Responsible for energy coupling to the transport system. This chain is Zinc import ATP-binding protein ZnuC, found in Hydrogenovibrio crunogenus (strain DSM 25203 / XCL-2) (Thiomicrospira crunogena).